Here is a 272-residue protein sequence, read N- to C-terminus: Type III pantothenate kinase (272 aa).

Residue 6-13 coordinates ATP; sequence DVRNTHTV. Residue 109 to 112 coordinates substrate; sequence GADR. Asp111 serves as the catalytic Proton acceptor. Asp131 serves as a coordination point for K(+). ATP is bound at residue Ser134. Thr186 provides a ligand contact to substrate.

The protein belongs to the type III pantothenate kinase family. As to quaternary structure, homodimer. NH4(+) serves as cofactor. It depends on K(+) as a cofactor.

The protein resides in the cytoplasm. It catalyses the reaction (R)-pantothenate + ATP = (R)-4'-phosphopantothenate + ADP + H(+). The protein operates within cofactor biosynthesis; coenzyme A biosynthesis; CoA from (R)-pantothenate: step 1/5. Functionally, catalyzes the phosphorylation of pantothenate (Pan), the first step in CoA biosynthesis. The chain is Type III pantothenate kinase from Mycobacterium bovis (strain BCG / Pasteur 1173P2).